The chain runs to 75 residues: Large ribosomal subunit protein bL28 (75 aa).

It belongs to the bacterial ribosomal protein bL28 family.

In Buchnera aphidicola subsp. Acyrthosiphon pisum (strain 5A), this protein is Large ribosomal subunit protein bL28.